Reading from the N-terminus, the 121-residue chain is Basic phospholipase A2 VRV-PL-V (121 aa).

7 disulfides stabilise this stretch: cysteine 26-cysteine 115, cysteine 28-cysteine 44, cysteine 43-cysteine 95, cysteine 49-cysteine 121, cysteine 50-cysteine 88, cysteine 57-cysteine 81, and cysteine 75-cysteine 86. Ca(2+) is bound by residues tyrosine 27, glycine 29, and glycine 31. The active site involves histidine 47. Aspartate 48 is a binding site for Ca(2+). Aspartate 89 is a catalytic residue.

The protein belongs to the phospholipase A2 family. Group II subfamily. D49 sub-subfamily. Monomer. Ca(2+) serves as cofactor. As to expression, expressed by the venom gland.

The protein resides in the secreted. It catalyses the reaction a 1,2-diacyl-sn-glycero-3-phosphocholine + H2O = a 1-acyl-sn-glycero-3-phosphocholine + a fatty acid + H(+). Snake venom phospholipase A2 (PLA2) that has a low enzymatic activity. PLA2 catalyzes the calcium-dependent hydrolysis of the 2-acyl groups in 3-sn-phosphoglycerides. This Daboia russelii (Russel's viper) protein is Basic phospholipase A2 VRV-PL-V.